The sequence spans 132 residues: Small ribosomal subunit protein uS8 (132 aa).

This sequence belongs to the universal ribosomal protein uS8 family. In terms of assembly, part of the 30S ribosomal subunit. Contacts proteins S5 and S12.

One of the primary rRNA binding proteins, it binds directly to 16S rRNA central domain where it helps coordinate assembly of the platform of the 30S subunit. This is Small ribosomal subunit protein uS8 from Francisella tularensis subsp. novicida (strain U112).